We begin with the raw amino-acid sequence, 824 residues long: Leucine--tRNA ligase (824 aa).

Positions 42 to 52 (PYPSGRIHMGH) match the 'HIGH' region motif. The 'KMSKS' region signature appears at 581–585 (KMSKS). ATP is bound at residue lysine 584.

The protein belongs to the class-I aminoacyl-tRNA synthetase family.

Its subcellular location is the cytoplasm. The enzyme catalyses tRNA(Leu) + L-leucine + ATP = L-leucyl-tRNA(Leu) + AMP + diphosphate. The chain is Leucine--tRNA ligase from Geotalea daltonii (strain DSM 22248 / JCM 15807 / FRC-32) (Geobacter daltonii).